Consider the following 332-residue polypeptide: MTRIAINGFGRIGRNVLRALLERDSDLDVVAVNDLTEPATLARLLAYDTTSGRLGRPVTVEGNVLVVDGRRITVTAEREPANLPWAELGVDIVLEATGRFTSAKAARAHLDAGAKKVLVSAPADGADITLAFGVNTDAYDPDLHTIVSNASCTTNALAPLAKVLDDLAGIEHGFMTTVHAYTQEQNLQDGPHRDPRRARAAAVNIVPTTTGAAKAIGLVLPNLDGKLSGDSIRVPVPVGSIVELNTTVARDVTRDEVLDAYRAAAQGPLAGVLEYSEDPLVSSDITGNPASSIFDSELTRVDGRHIKVVAWYDNEWGFSNRVIDTLQLLAAR.

Residues 11 to 12 (RI), Asp34, Arg78, and Ser120 contribute to the NAD(+) site. D-glyceraldehyde 3-phosphate is bound by residues 151–153 (SCT), Thr182, Arg197, 210–211 (TG), and Arg233. Catalysis depends on Cys152, which acts as the Nucleophile. Position 314 (Asn314) interacts with NAD(+).

This sequence belongs to the glyceraldehyde-3-phosphate dehydrogenase family. In terms of assembly, homotetramer.

The protein resides in the cytoplasm. It catalyses the reaction D-glyceraldehyde 3-phosphate + phosphate + NAD(+) = (2R)-3-phospho-glyceroyl phosphate + NADH + H(+). It functions in the pathway carbohydrate degradation; glycolysis; pyruvate from D-glyceraldehyde 3-phosphate: step 1/5. Functionally, catalyzes the oxidative phosphorylation of glyceraldehyde 3-phosphate (G3P) to 1,3-bisphosphoglycerate (BPG) using the cofactor NAD. The first reaction step involves the formation of a hemiacetal intermediate between G3P and a cysteine residue, and this hemiacetal intermediate is then oxidized to a thioester, with concomitant reduction of NAD to NADH. The reduced NADH is then exchanged with the second NAD, and the thioester is attacked by a nucleophilic inorganic phosphate to produce BPG. The sequence is that of Glyceraldehyde-3-phosphate dehydrogenase (gap) from Kitasatospora aureofaciens (Streptomyces aureofaciens).